A 323-amino-acid polypeptide reads, in one-letter code: tRNA N6-adenosine threonylcarbamoyltransferase (323 aa).

H105, H109, and Y126 together coordinate Fe cation. Substrate is bound by residues 126–130, D158, G171, E175, and N255; that span reads YVSGG. A Fe cation-binding site is contributed by D283.

The protein belongs to the KAE1 / TsaD family. As to quaternary structure, monomer. Component of the KEOPS complex that consists of Kae1, Bud32, Cgi121 and Pcc1; the whole complex dimerizes. Requires Fe(2+) as cofactor.

It is found in the cytoplasm. The catalysed reaction is L-threonylcarbamoyladenylate + adenosine(37) in tRNA = N(6)-L-threonylcarbamoyladenosine(37) in tRNA + AMP + H(+). Functionally, required for the formation of a threonylcarbamoyl group on adenosine at position 37 (t(6)A37) in tRNAs that read codons beginning with adenine. Is a component of the KEOPS complex that is probably involved in the transfer of the threonylcarbamoyl moiety of threonylcarbamoyl-AMP (TC-AMP) to the N6 group of A37. Kae1 likely plays a direct catalytic role in this reaction, but requires other protein(s) of the complex to fulfill this activity. This chain is tRNA N6-adenosine threonylcarbamoyltransferase, found in Archaeoglobus fulgidus (strain ATCC 49558 / DSM 4304 / JCM 9628 / NBRC 100126 / VC-16).